Reading from the N-terminus, the 144-residue chain is D-aminoacyl-tRNA deacylase (144 aa).

Residues 136–137 (GP) carry the Gly-cisPro motif, important for rejection of L-amino acids motif.

The protein belongs to the DTD family. Homodimer.

The protein resides in the cytoplasm. The catalysed reaction is glycyl-tRNA(Ala) + H2O = tRNA(Ala) + glycine + H(+). It catalyses the reaction a D-aminoacyl-tRNA + H2O = a tRNA + a D-alpha-amino acid + H(+). Functionally, an aminoacyl-tRNA editing enzyme that deacylates mischarged D-aminoacyl-tRNAs. Also deacylates mischarged glycyl-tRNA(Ala), protecting cells against glycine mischarging by AlaRS. Acts via tRNA-based rather than protein-based catalysis; rejects L-amino acids rather than detecting D-amino acids in the active site. By recycling D-aminoacyl-tRNA to D-amino acids and free tRNA molecules, this enzyme counteracts the toxicity associated with the formation of D-aminoacyl-tRNA entities in vivo and helps enforce protein L-homochirality. In Aliivibrio salmonicida (strain LFI1238) (Vibrio salmonicida (strain LFI1238)), this protein is D-aminoacyl-tRNA deacylase.